The following is a 288-amino-acid chain: Ribosomal RNA small subunit methyltransferase A (288 aa).

Residues Asn-28, Leu-30, Gly-55, Glu-77, Asp-103, and Asn-123 each coordinate S-adenosyl-L-methionine.

Belongs to the class I-like SAM-binding methyltransferase superfamily. rRNA adenine N(6)-methyltransferase family. RsmA subfamily.

The protein localises to the cytoplasm. The enzyme catalyses adenosine(1518)/adenosine(1519) in 16S rRNA + 4 S-adenosyl-L-methionine = N(6)-dimethyladenosine(1518)/N(6)-dimethyladenosine(1519) in 16S rRNA + 4 S-adenosyl-L-homocysteine + 4 H(+). Specifically dimethylates two adjacent adenosines (A1518 and A1519) in the loop of a conserved hairpin near the 3'-end of 16S rRNA in the 30S particle. May play a critical role in biogenesis of 30S subunits. The polypeptide is Ribosomal RNA small subunit methyltransferase A (Xanthobacter autotrophicus (strain ATCC BAA-1158 / Py2)).